Consider the following 770-residue polypeptide: Nucleus-vacuole junction protein 2 (770 aa).

The Cytoplasmic segment spans residues 1-5 (MASLK). The chain crosses the membrane as a helical; Signal-anchor for type II membrane protein span at residues 6-26 (VFLAVYLLGGITFLPLVLFTL). Residues 27 to 770 (YKIHLLYSNL…EFEEQREPKL (744 aa)) are Lumenal-facing. Positions 114 to 266 (TALQEQILQR…WYYQLINASK (153 aa)) constitute a PH domain. N-linked (GlcNAc...) asparagine glycosylation is found at Asn228, Asn263, Asn279, Asn300, Asn391, Asn528, and Asn529. The SMP-LTD domain maps to 304 to 504 (NQLTTKWLNA…YPTPNEVYRG (201 aa)). Disordered regions lie at residues 541-566 (EGGM…LKDL), 578-600 (TQTT…TKSR), and 615-770 (KDNV…EPKL). Positions 554 to 566 (LRPERKKENLKDL) are enriched in basic and acidic residues. The segment covering 587-596 (NDDVSSSENS) has biased composition (polar residues). 2 N-linked (GlcNAc...) asparagine glycosylation sites follow: Asn595 and Asn620. Phosphoserine is present on residues Ser640 and Ser669. The span at 679–688 (LEGRKEKDTE) shows a compositional bias: basic and acidic residues. Asn700 is a glycosylation site (N-linked (GlcNAc...) asparagine). 2 stretches are compositionally biased toward polar residues: residues 713-725 (FSVS…NSLK) and 736-751 (LESS…QNRF). Position 717 is a phosphoserine (Ser717). Residue Asn718 is glycosylated (N-linked (GlcNAc...) asparagine). Residues Ser720 and Ser723 each carry the phosphoserine modification. Residues 756-770 (FKQDLEFEEQREPKL) show a composition bias toward basic and acidic residues.

It localises to the endoplasmic reticulum membrane. The protein localises to the nucleus membrane. Functionally, during endoplasmic reticulum (ER) stress or when cellular ceramide levels increase, induces contacts between the ER and medial-Golgi complex to facilitate non-vesicular transport of ceramides from the ER to the Golgi complex where they are converted to complex sphingolipids, preventing toxic ceramide accumulation. This chain is Nucleus-vacuole junction protein 2, found in Saccharomyces cerevisiae (strain ATCC 204508 / S288c) (Baker's yeast).